The following is a 327-amino-acid chain: Biotin synthase (327 aa).

A Radical SAM core domain is found at 49–282 (FNKEKIDLCS…NKVIRLCGGR (234 aa)). The [4Fe-4S] cluster site is built by Cys67, Cys71, and Cys74. Residues Ser110, Cys142, Cys201, and Arg277 each coordinate [2Fe-2S] cluster.

It belongs to the radical SAM superfamily. Biotin synthase family. As to quaternary structure, homodimer. [4Fe-4S] cluster serves as cofactor. Requires [2Fe-2S] cluster as cofactor.

The catalysed reaction is (4R,5S)-dethiobiotin + (sulfur carrier)-SH + 2 reduced [2Fe-2S]-[ferredoxin] + 2 S-adenosyl-L-methionine = (sulfur carrier)-H + biotin + 2 5'-deoxyadenosine + 2 L-methionine + 2 oxidized [2Fe-2S]-[ferredoxin]. It participates in cofactor biosynthesis; biotin biosynthesis; biotin from 7,8-diaminononanoate: step 2/2. In terms of biological role, catalyzes the conversion of dethiobiotin (DTB) to biotin by the insertion of a sulfur atom into dethiobiotin via a radical-based mechanism. This chain is Biotin synthase, found in Methanococcus maripaludis (strain DSM 14266 / JCM 13030 / NBRC 101832 / S2 / LL).